The chain runs to 101 residues: Small ribosomal subunit protein uS14 (101 aa).

The protein belongs to the universal ribosomal protein uS14 family. In terms of assembly, part of the 30S ribosomal subunit. Contacts proteins S3 and S10.

Its function is as follows. Binds 16S rRNA, required for the assembly of 30S particles and may also be responsible for determining the conformation of the 16S rRNA at the A site. This Pseudomonas putida (strain ATCC 47054 / DSM 6125 / CFBP 8728 / NCIMB 11950 / KT2440) protein is Small ribosomal subunit protein uS14.